The sequence spans 177 residues: UPF0114 protein HPP12_0190 (177 aa).

The next 4 helical transmembrane spans lie at 15–35 (WLLAPLCIAMSLVLVVLGYAF), 54–74 (LVLSALGLVDLLFMAGLVLMV), 102–122 (FNALKLKVSLSIVAISAIFLL), and 145–165 (PIFWQVVINLVFVCSALLAAV).

The protein belongs to the UPF0114 family.

It localises to the cell membrane. In Helicobacter pylori (strain P12), this protein is UPF0114 protein HPP12_0190.